The sequence spans 692 residues: Elongation factor G (692 aa).

The tr-type G domain maps to 8 to 282 (EKTRNIGIMA…AVIDYLPSPL (275 aa)). Residues 17-24 (AHVDAGKT), 81-85 (DTPGH), and 135-138 (NKMD) contribute to the GTP site.

This sequence belongs to the TRAFAC class translation factor GTPase superfamily. Classic translation factor GTPase family. EF-G/EF-2 subfamily.

The protein resides in the cytoplasm. In terms of biological role, catalyzes the GTP-dependent ribosomal translocation step during translation elongation. During this step, the ribosome changes from the pre-translocational (PRE) to the post-translocational (POST) state as the newly formed A-site-bound peptidyl-tRNA and P-site-bound deacylated tRNA move to the P and E sites, respectively. Catalyzes the coordinated movement of the two tRNA molecules, the mRNA and conformational changes in the ribosome. The polypeptide is Elongation factor G (Streptococcus agalactiae serotype Ia (strain ATCC 27591 / A909 / CDC SS700)).